Reading from the N-terminus, the 311-residue chain is Mitoferrin (311 aa).

3 Solcar repeats span residues 15–102 (HSIP…MKSF), 111–195 (EHTL…WQQV), and 202–302 (YDPK…FKFM). The next 6 helical transmembrane spans lie at 17–36 (IPVHLAAGALAGAVEHCVMF), 77–96 (GVNAVAAGSMPAHALYFTVY), 112–132 (HTLAYGASGVVATLIHDAVMN), 170–189 (SYTTQLAMNVPFQAIHFMGY), 204–223 (PKSHLIAGGLAGGLAAAVTT), and 277–296 (GLQARVIFQVPATALSWSVY).

Belongs to the mitochondrial carrier (TC 2.A.29) family.

Its subcellular location is the mitochondrion inner membrane. Mitochondrial iron transporter that mediates iron uptake. Probably required for heme synthesis of hemoproteins and Fe-S cluster assembly. The sequence is that of Mitoferrin from Caenorhabditis briggsae.